The primary structure comprises 138 residues: Ribosome-binding factor A (138 aa).

The protein belongs to the RbfA family. Monomer. Binds 30S ribosomal subunits, but not 50S ribosomal subunits or 70S ribosomes.

It localises to the cytoplasm. In terms of biological role, one of several proteins that assist in the late maturation steps of the functional core of the 30S ribosomal subunit. Associates with free 30S ribosomal subunits (but not with 30S subunits that are part of 70S ribosomes or polysomes). Required for efficient processing of 16S rRNA. May interact with the 5'-terminal helix region of 16S rRNA. The sequence is that of Ribosome-binding factor A from Chromobacterium violaceum (strain ATCC 12472 / DSM 30191 / JCM 1249 / CCUG 213 / NBRC 12614 / NCIMB 9131 / NCTC 9757 / MK).